Here is a 69-residue protein sequence, read N- to C-terminus: Large ribosomal subunit protein uL29 (69 aa).

This sequence belongs to the universal ribosomal protein uL29 family.

In Staphylococcus haemolyticus (strain JCSC1435), this protein is Large ribosomal subunit protein uL29.